Here is a 31-residue protein sequence, read N- to C-terminus: Cytochrome b6-f complex subunit 6 (31 aa).

Residues 4-24 (VIAYLGLLASVLIGTIVIYLG) traverse the membrane as a helical segment.

The protein belongs to the PetL family. The 4 large subunits of the cytochrome b6-f complex are cytochrome b6, subunit IV (17 kDa polypeptide, PetD), cytochrome f and the Rieske protein, while the 4 small subunits are PetG, PetL, PetM and PetN. The complex functions as a dimer.

The protein resides in the plastid. It is found in the chloroplast thylakoid membrane. Functionally, component of the cytochrome b6-f complex, which mediates electron transfer between photosystem II (PSII) and photosystem I (PSI), cyclic electron flow around PSI, and state transitions. PetL is important for photoautotrophic growth as well as for electron transfer efficiency and stability of the cytochrome b6-f complex. This Oltmannsiellopsis viridis (Marine flagellate) protein is Cytochrome b6-f complex subunit 6.